Reading from the N-terminus, the 150-residue chain is S-protein homolog 3 (150 aa).

The N-terminal stretch at 1–23 is a signal peptide; sequence MKNILKTQVHVVVIYLLIKIAFS. Asparagine 32 and asparagine 70 each carry an N-linked (GlcNAc...) asparagine glycan.

This sequence belongs to the plant self-incompatibility (S1) protein family.

The protein resides in the secreted. In Arabidopsis thaliana (Mouse-ear cress), this protein is S-protein homolog 3.